Here is a 306-residue protein sequence, read N- to C-terminus: D-alanine--D-alanine ligase B (306 aa).

Catalysis depends on residues E15 and S150. One can recognise an ATP-grasp domain in the interval 101–303 (KLLWQGAGLP…FSQLVVRILE (203 aa)). 134-189 (ISSLGLPVIVKPSREGSSVGMSKVVAENALQDALRLAFQHDEEVLIEKWLSGPEFT) is a binding site for ATP. Mg(2+)-binding residues include D257, E270, and N272. S281 is a catalytic residue.

Belongs to the D-alanine--D-alanine ligase family. As to quaternary structure, monomer. Mg(2+) serves as cofactor. The cofactor is Mn(2+).

It localises to the cytoplasm. It carries out the reaction 2 D-alanine + ATP = D-alanyl-D-alanine + ADP + phosphate + H(+). It functions in the pathway cell wall biogenesis; peptidoglycan biosynthesis. In terms of biological role, cell wall formation. In Escherichia coli O6:H1 (strain CFT073 / ATCC 700928 / UPEC), this protein is D-alanine--D-alanine ligase B.